The chain runs to 121 residues: Ribonuclease P protein component 4 (121 aa).

Zn(2+) is bound by residues cysteine 63, cysteine 66, cysteine 89, and cysteine 92.

The protein belongs to the eukaryotic/archaeal RNase P protein component 4 family. As to quaternary structure, consists of a catalytic RNA component and at least 4-5 protein subunits. Requires Zn(2+) as cofactor.

It localises to the cytoplasm. It catalyses the reaction Endonucleolytic cleavage of RNA, removing 5'-extranucleotides from tRNA precursor.. Functionally, part of ribonuclease P, a protein complex that generates mature tRNA molecules by cleaving their 5'-ends. In Methanobrevibacter smithii (strain ATCC 35061 / DSM 861 / OCM 144 / PS), this protein is Ribonuclease P protein component 4.